Reading from the N-terminus, the 750-residue chain is Photosystem I P700 chlorophyll a apoprotein A1 (750 aa).

Transmembrane regions (helical) follow at residues 70–93 (VFSA…FHGA), 156–179 (LYCT…FHYH), 195–219 (LNHH…HVSL), 291–309 (IAHH…GHMY), 346–369 (WHAQ…HHMY), 385–411 (LSLF…IFMV), 433–455 (AIIS…LYIH), and 531–549 (FLVH…LILL). Residues Cys573 and Cys582 each coordinate [4Fe-4S] cluster. 2 helical membrane-spanning segments follow: residues 589-610 (HVFL…HFSW) and 664-686 (LSAY…MFLF). A chlorophyll a'-binding site is contributed by His675. Chlorophyll a contacts are provided by Met683 and Tyr691. Trp692 contributes to the phylloquinone binding site. Residues 724-744 (AVGVTHYLLGGIATTWAFFLA) form a helical membrane-spanning segment.

It belongs to the PsaA/PsaB family. The PsaA/B heterodimer binds the P700 chlorophyll special pair and subsequent electron acceptors. PSI consists of a core antenna complex that captures photons, and an electron transfer chain that converts photonic excitation into a charge separation. The eukaryotic PSI reaction center is composed of at least 11 subunits. The cofactor is P700 is a chlorophyll a/chlorophyll a' dimer, A0 is one or more chlorophyll a, A1 is one or both phylloquinones and FX is a shared 4Fe-4S iron-sulfur center..

The protein localises to the plastid. It is found in the chloroplast thylakoid membrane. It carries out the reaction reduced [plastocyanin] + hnu + oxidized [2Fe-2S]-[ferredoxin] = oxidized [plastocyanin] + reduced [2Fe-2S]-[ferredoxin]. Functionally, psaA and PsaB bind P700, the primary electron donor of photosystem I (PSI), as well as the electron acceptors A0, A1 and FX. PSI is a plastocyanin-ferredoxin oxidoreductase, converting photonic excitation into a charge separation, which transfers an electron from the donor P700 chlorophyll pair to the spectroscopically characterized acceptors A0, A1, FX, FA and FB in turn. Oxidized P700 is reduced on the lumenal side of the thylakoid membrane by plastocyanin. The protein is Photosystem I P700 chlorophyll a apoprotein A1 of Pelargonium hortorum (Common geranium).